Reading from the N-terminus, the 545-residue chain is Intercellular adhesion molecule 1 (545 aa).

The first 27 residues, 1 to 27 (MASTRARPMLPLLLVLVAVVIPGPVGA), serve as a signal peptide directing secretion. Residues 28–492 (QVSIHPTEAF…HLTVLYHDQN (465 aa)) lie on the Extracellular side of the membrane. 2 Ig-like C2-type domains span residues 41–103 (GGSV…QSSA) and 128–193 (GKNL…LDLR). A glycan (N-linked (GlcNAc...) asparagine) is linked at Asn47. 3 cysteine pairs are disulfide-bonded: Cys48-Cys92, Cys52-Cys96, and Cys135-Cys186. Asn154 carries an N-linked (GlcNAc...) asparagine glycan. A Cell attachment site motif is present at residues 177–179 (RGD). Asn183 and Asn202 each carry an N-linked (GlcNAc...) asparagine glycan. Positions 230–297 (GTQQKFLCSL…LRCVLELADQ (68 aa)) constitute an Ig-like C2-type 3 domain. Cys237 and Cys290 are joined by a disulfide. N-linked (GlcNAc...) asparagine glycans are attached at residues Asn309, Asn344, Asn396, Asn417, Asn439, and Asn464. Residues 325-389 (GDQVTVKCEA…FFCSAALEVD (65 aa)) enclose the Ig-like C2-type 4 domain. A disulfide bridge links Cys332 with Cys382. Residues 343-365 (LNSTSPRPPTSQGTSPRPPTSQI) are disordered. Disulfide bonds link Cys414–Cys430, Cys430–Cys469, and Cys442–Cys469. In terms of domain architecture, Ig-like C2-type 5 spans 423–476 (GSQQTLTCQPQGNPAPNLTCSRKADGVPLPIGMVKSVKREMNGTYKCRAFSSRG). The helical transmembrane segment at 493 to 517 (TWVIIVGVLVLIIAGFVIVASIYTY) threads the bilayer. The Cytoplasmic portion of the chain corresponds to 518-545 (YRQRKIRIYKLQKAQEEALKLKVQAPPP).

This sequence belongs to the immunoglobulin superfamily. ICAM family. In terms of assembly, homodimer. Interacts with MUC1 and promotes cell aggregation in epithelial cells. Interacts with ARHGEF26/SGEF. Interacts (on T cell side) with CD81, CD247 and CD9 at immunological synapses between antigen-presenting cells and T cells. In terms of processing, monoubiquitinated, which is promoted by MARCH9 and leads to endocytosis.

It is found in the membrane. Functionally, ICAM proteins are ligands for the leukocyte adhesion protein LFA-1 (integrin alpha-L/beta-2). During leukocyte trans-endothelial migration, ICAM1 engagement promotes the assembly of endothelial apical cups through ARHGEF26/SGEF and RHOG activation. This chain is Intercellular adhesion molecule 1 (Icam1), found in Rattus norvegicus (Rat).